The sequence spans 317 residues: E3 ubiquitin-protein ligase NRDP1 (317 aa).

Residues 18–57 (CPICSGVLEEPVQAPHCEHAFCNACITQWFSQQQTCPVDR) form an RING-type; degenerate zinc finger. A coiled-coil region spans residues 135-175 (IKHLRSVVQQQQIRIGELEKTAAESKHQLSEQKRDIQLLKA).

It catalyses the reaction S-ubiquitinyl-[E2 ubiquitin-conjugating enzyme]-L-cysteine + [acceptor protein]-L-lysine = [E2 ubiquitin-conjugating enzyme]-L-cysteine + N(6)-ubiquitinyl-[acceptor protein]-L-lysine.. The protein operates within protein modification; protein ubiquitination. In terms of biological role, acts as E3 ubiquitin-protein ligase and regulates the degradation of target proteins. The polypeptide is E3 ubiquitin-protein ligase NRDP1 (rnf41) (Xenopus laevis (African clawed frog)).